The chain runs to 275 residues: Dermonecrotic toxin SpeSicTox-betaIIA2iii (275 aa).

The active site involves His5. Mg(2+) is bound by residues Glu25 and Asp27. The active-site Nucleophile is the His41. 2 cysteine pairs are disulfide-bonded: Cys45–Cys51 and Cys47–Cys190. Residue Asp85 participates in Mg(2+) binding.

Belongs to the arthropod phospholipase D family. Class II subfamily. Mg(2+) is required as a cofactor. In terms of tissue distribution, expressed by the venom gland.

The protein localises to the secreted. It catalyses the reaction an N-(acyl)-sphingosylphosphocholine = an N-(acyl)-sphingosyl-1,3-cyclic phosphate + choline. It carries out the reaction an N-(acyl)-sphingosylphosphoethanolamine = an N-(acyl)-sphingosyl-1,3-cyclic phosphate + ethanolamine. The enzyme catalyses a 1-acyl-sn-glycero-3-phosphocholine = a 1-acyl-sn-glycero-2,3-cyclic phosphate + choline. The catalysed reaction is a 1-acyl-sn-glycero-3-phosphoethanolamine = a 1-acyl-sn-glycero-2,3-cyclic phosphate + ethanolamine. In terms of biological role, dermonecrotic toxins cleave the phosphodiester linkage between the phosphate and headgroup of certain phospholipids (sphingolipid and lysolipid substrates), forming an alcohol (often choline) and a cyclic phosphate. This toxin acts on sphingomyelin (SM). It may also act on ceramide phosphoethanolamine (CPE), lysophosphatidylcholine (LPC) and lysophosphatidylethanolamine (LPE), but not on lysophosphatidylserine (LPS), and lysophosphatidylglycerol (LPG). It acts by transphosphatidylation, releasing exclusively cyclic phosphate products as second products. Induces dermonecrosis, hemolysis, increased vascular permeability, edema, inflammatory response, and platelet aggregation. This chain is Dermonecrotic toxin SpeSicTox-betaIIA2iii, found in Sicarius peruensis (Six-eyed sand spider).